Reading from the N-terminus, the 329-residue chain is MSAFNSISVLGGGAWGTALALTAARAGRSVTLWEHDPGHAQHLEQTRESRFLPGVMLEPSIKVTRDLAEAARAEALLLVVPAQVLRSVATSLQPLIAARTPLIACAKGIEHGTHRFMTEIIAECAPNAIPAILSGPSFAADVARGLPTAVTIAASDAAIAQALAQAMNSGSFRPYHSTDVRGVELGGATKNVMAIAAGIVAGRKLGASALAAMTTRGFVELVRFGKAYGARIETMHGLSGLGDLTMCCSTPQSRNFSFGMALGRGESIDEAAHGKLAEGYYTAPVLLEMAQAKGVEMPISTAVAAILQGQLGVDAAIEGLLTRPLKAEE.

Residues Trp-15, His-35, and Lys-107 each coordinate NADPH. Lys-107, Gly-135, and Ser-137 together coordinate sn-glycerol 3-phosphate. Ala-139 provides a ligand contact to NADPH. Positions 190, 243, 253, 254, and 255 each coordinate sn-glycerol 3-phosphate. Catalysis depends on Lys-190, which acts as the Proton acceptor. NADPH is bound at residue Arg-254. Leu-276 and Glu-278 together coordinate NADPH.

Belongs to the NAD-dependent glycerol-3-phosphate dehydrogenase family.

The protein resides in the cytoplasm. The catalysed reaction is sn-glycerol 3-phosphate + NAD(+) = dihydroxyacetone phosphate + NADH + H(+). It catalyses the reaction sn-glycerol 3-phosphate + NADP(+) = dihydroxyacetone phosphate + NADPH + H(+). The protein operates within membrane lipid metabolism; glycerophospholipid metabolism. Functionally, catalyzes the reduction of the glycolytic intermediate dihydroxyacetone phosphate (DHAP) to sn-glycerol 3-phosphate (G3P), the key precursor for phospholipid synthesis. The sequence is that of Glycerol-3-phosphate dehydrogenase [NAD(P)+] from Rhodopseudomonas palustris (strain BisB5).